The following is a 430-amino-acid chain: DD-carboxypeptidase/endopeptidase Mpg (430 aa).

Zn(2+)-binding residues include His295, Asp299, and His375.

This sequence belongs to the peptidase M23B family. Monomer. Zn(2+) is required as a cofactor. Likely to be synthesized as a proenzyme. The cleavage of the N-terminal domain is probably required for the activation of the enzyme.

Its subcellular location is the cell outer membrane. Has both endopeptidase and DD-carboxypeptidase activities. Degrades cell wall peptidoglycan (PG) to allow consummate expression of pili. The polypeptide is DD-carboxypeptidase/endopeptidase Mpg (Neisseria meningitidis serogroup B (strain ATCC 13091 / M2091)).